The chain runs to 252 residues: 3-dehydroquinate dehydratase (252 aa).

3-dehydroquinate-binding positions include serine 21, 46 to 48 (EWR), and arginine 82. The Proton donor/acceptor role is filled by histidine 143. Lysine 170 functions as the Schiff-base intermediate with substrate in the catalytic mechanism. The 3-dehydroquinate site is built by arginine 213, serine 232, and glutamine 236.

It belongs to the type-I 3-dehydroquinase family. In terms of assembly, homodimer.

The catalysed reaction is 3-dehydroquinate = 3-dehydroshikimate + H2O. The protein operates within metabolic intermediate biosynthesis; chorismate biosynthesis; chorismate from D-erythrose 4-phosphate and phosphoenolpyruvate: step 3/7. Functionally, involved in the third step of the chorismate pathway, which leads to the biosynthesis of aromatic amino acids. Catalyzes the cis-dehydration of 3-dehydroquinate (DHQ) and introduces the first double bond of the aromatic ring to yield 3-dehydroshikimate. The polypeptide is 3-dehydroquinate dehydratase (Escherichia coli O6:K15:H31 (strain 536 / UPEC)).